We begin with the raw amino-acid sequence, 365 residues long: Chorismate synthase (365 aa).

Residue Arg-46 participates in NADP(+) binding. Residues 124 to 126, Gly-284, 299 to 303, and Arg-326 each bind FMN; these read RAS and KPTPS.

This sequence belongs to the chorismate synthase family. FMNH2 serves as cofactor.

The catalysed reaction is 5-O-(1-carboxyvinyl)-3-phosphoshikimate = chorismate + phosphate. Its pathway is metabolic intermediate biosynthesis; chorismate biosynthesis; chorismate from D-erythrose 4-phosphate and phosphoenolpyruvate: step 7/7. In terms of biological role, catalyzes the anti-1,4-elimination of the C-3 phosphate and the C-6 proR hydrogen from 5-enolpyruvylshikimate-3-phosphate (EPSP) to yield chorismate, which is the branch point compound that serves as the starting substrate for the three terminal pathways of aromatic amino acid biosynthesis. This reaction introduces a second double bond into the aromatic ring system. The sequence is that of Chorismate synthase from Pyrobaculum islandicum (strain DSM 4184 / JCM 9189 / GEO3).